The sequence spans 208 residues: Uracil phosphoribosyltransferase (208 aa).

Residues R78, R103, and D130–T138 each bind 5-phospho-alpha-D-ribose 1-diphosphate. Residues I193 and G198–A200 contribute to the uracil site. D199 contacts 5-phospho-alpha-D-ribose 1-diphosphate.

Belongs to the UPRTase family. Mg(2+) is required as a cofactor.

It catalyses the reaction UMP + diphosphate = 5-phospho-alpha-D-ribose 1-diphosphate + uracil. Its pathway is pyrimidine metabolism; UMP biosynthesis via salvage pathway; UMP from uracil: step 1/1. Allosterically activated by GTP. In terms of biological role, catalyzes the conversion of uracil and 5-phospho-alpha-D-ribose 1-diphosphate (PRPP) to UMP and diphosphate. This Maridesulfovibrio salexigens (strain ATCC 14822 / DSM 2638 / NCIMB 8403 / VKM B-1763) (Desulfovibrio salexigens) protein is Uracil phosphoribosyltransferase.